The sequence spans 409 residues: TM2 domain-containing protein ZK858.5 (409 aa).

A TM2 domain is found at Val8 to Phe55. 6 consecutive transmembrane segments (helical) span residues Pro10–Leu30, Phe37–Phe57, Val104–Trp124, Ile127–Ile147, Met168–Ser190, and His209–Ser229.

This sequence belongs to the TM2 family.

Its subcellular location is the membrane. The polypeptide is TM2 domain-containing protein ZK858.5 (Caenorhabditis elegans).